We begin with the raw amino-acid sequence, 200 residues long: Lipopolysaccharide core heptose(II)-phosphate phosphatase (200 aa).

An N-terminal signal peptide occupies residues 1–25 (MLAFCRSSLKSKKYFIILLALAAIA).

The protein belongs to the phosphoglycerate mutase family. Ais subfamily.

The protein resides in the periplasm. Its pathway is bacterial outer membrane biogenesis; lipopolysaccharide metabolism. Catalyzes the dephosphorylation of heptose(II) of the outer membrane lipopolysaccharide core. This Escherichia coli O157:H7 protein is Lipopolysaccharide core heptose(II)-phosphate phosphatase.